Reading from the N-terminus, the 187-residue chain is UPF0301 protein VP2612 (187 aa).

It belongs to the UPF0301 (AlgH) family.

The chain is UPF0301 protein VP2612 from Vibrio parahaemolyticus serotype O3:K6 (strain RIMD 2210633).